We begin with the raw amino-acid sequence, 434 residues long: Oxysterol-binding protein homolog 5 (434 aa).

The segment at 18–371 (SSFNGDLSSL…KQVDYMNENT (354 aa)) is OSBP-related domain (ORD). Position 24–29 (24–29 (LSSLSA)) interacts with a 1,2-diacyl-sn-glycero-3-phospho-(1D-myo-inositol 4-phosphate). Position 96 (Gln-96) interacts with 20-hydroxycholesterol. Gln-96 provides a ligand contact to 25-hydroxycholesterol. 7beta-hydroxycholesterol contacts are provided by Gln-96 and Arg-100. Gln-96 is a binding site for cholesterol. Position 96 (Gln-96) interacts with ergosterol. A 1,2-diacyl-sn-glycero-3-phospho-(1D-myo-inositol 4-phosphate) is bound by residues 109–112 (KPLN), 143–144 (HH), Lys-335, Glu-339, and Arg-343. Residue Ser-389 is modified to Phosphoserine.

It belongs to the OSBP family.

The protein localises to the vacuole membrane. The protein resides in the bud neck. Lipid transport protein (LTP) involved in non-vesicular transfer of lipids between membranes. Functions in phosphoinositide-coupled directional transport of various lipids by carrying the lipid molecule in a hydrophobic pocket and transferring it between membranes through the cytosol. Involved in maintenance of intracellular sterol distribution and homeostasis. Plays a role in ergosterol synthesis. Binds and transports sterol. May be involved in ergosterol transport from the plasma membrane (PM) to the ER. In Saccharomyces cerevisiae (strain ATCC 204508 / S288c) (Baker's yeast), this protein is Oxysterol-binding protein homolog 5.